The sequence spans 370 residues: Probable protein phosphatase 2C 67 (370 aa).

Residues 35 to 344 (TFGEFSMAMI…DDITVIVVYL (310 aa)) form the PPM-type phosphatase domain. Residues aspartate 77, glycine 78, aspartate 276, and aspartate 335 each coordinate Mn(2+).

This sequence belongs to the PP2C family. As to quaternary structure, interacts with SAUR19. Interacts with AHA2 at the plasma membrane. It depends on Mg(2+) as a cofactor. Mn(2+) serves as cofactor.

The protein resides in the cell membrane. It carries out the reaction O-phospho-L-seryl-[protein] + H2O = L-seryl-[protein] + phosphate. It catalyses the reaction O-phospho-L-threonyl-[protein] + H2O = L-threonyl-[protein] + phosphate. Dephosphorylates and represses plasma membrane H(+)-ATPases (PM H(+)-ATPases, e.g. AHA1 and AHA2), thus influencing negatively plant growth and fitness. Promotes the apical hook maintenance of etiolated seedlings. This is Probable protein phosphatase 2C 67 from Arabidopsis thaliana (Mouse-ear cress).